The following is a 336-amino-acid chain: DNA-directed RNA polymerase subunit alpha (336 aa).

Residues 1 to 232 (MIQKNWQELI…DQLSVFVNFD (232 aa)) are alpha N-terminal domain (alpha-NTD). An alpha C-terminal domain (alpha-CTD) region spans residues 248–336 (FNPALLKKVD…DLAKRYEDQY (89 aa)).

This sequence belongs to the RNA polymerase alpha chain family. In terms of assembly, homodimer. The RNAP catalytic core consists of 2 alpha, 1 beta, 1 beta' and 1 omega subunit. When a sigma factor is associated with the core the holoenzyme is formed, which can initiate transcription.

The catalysed reaction is RNA(n) + a ribonucleoside 5'-triphosphate = RNA(n+1) + diphosphate. Its function is as follows. DNA-dependent RNA polymerase catalyzes the transcription of DNA into RNA using the four ribonucleoside triphosphates as substrates. The sequence is that of DNA-directed RNA polymerase subunit alpha from Sinorhizobium medicae (strain WSM419) (Ensifer medicae).